Here is a 280-residue protein sequence, read N- to C-terminus: uncharacterized protein (280 aa).

The first 21 residues, 1-21, serve as a signal peptide directing secretion; it reads MRPAIKVGLSTASVYPLRAEA.

The protein to M.leprae ML2432 and S.coelicolor SCO3347.

This is an uncharacterized protein from Mycobacterium tuberculosis (strain CDC 1551 / Oshkosh).